Here is a 3112-residue protein sequence, read N- to C-terminus: Genome polyprotein (3112 aa).

In terms of domain architecture, Peptidase S30 spans 234-383 (KLTQRRANKI…PDCLEGLTYY (150 aa)). Catalysis depends on for P1 proteinase activity residues H286, D301, and S333. The 122-residue stretch at 729–850 (TLVPKSGFCY…IETFKDYRIG (122 aa)) folds into the Peptidase C6 domain. Catalysis depends on for helper component proteinase activity residues C737 and H809. The region spanning 1278 to 1429 (NIATGAGNEF…CVPTNHKVDV (152 aa)) is the Helicase ATP-binding domain. 1291-1298 (GDVGSGKS) is a binding site for ATP. Positions 1379–1382 (DECH) match the DECH box motif. The Helicase C-terminal domain maps to 1444-1627 (SIDSHAEGLR…EVNFVTREQV (184 aa)). The region spanning 2096–2311 (DDNYVPHSRC…ISWKGVPTNM (216 aa)) is the Peptidase C4 domain. Residues H2140, D2174, and C2243 each act as for nuclear inclusion protein A activity in the active site. A RdRp catalytic domain is found at 2569 to 2687 (WKFIDADGSR…NAPQGVCETI (119 aa)). Residues 2818–2867 (HSGADQSGVVKDQTGDKAEGSGTKTEDPPNQTTDPVNNPSNGGNKDAPQN) are disordered. A compositionally biased stretch (basic and acidic residues) spans 2830 to 2844 (QTGDKAEGSGTKTED). A compositionally biased stretch (polar residues) spans 2845-2867 (PPNQTTDPVNNPSNGGNKDAPQN).

Belongs to the potyviridae genome polyprotein family. VPg is uridylylated by the polymerase and is covalently attached to the 5'-end of the genomic RNA. This uridylylated form acts as a nucleotide-peptide primer for the polymerase. Post-translationally, genome polyprotein of potyviruses undergoes post-translational proteolytic processing by the main proteinase NIa-pro resulting in the production of at least ten individual proteins. The P1 proteinase and the HC-pro cleave only their respective C-termini autocatalytically. 6K1 is essential for proper proteolytic separation of P3 from CI.

It is found in the host cytoplasmic vesicle. The protein localises to the virion. The catalysed reaction is RNA(n) + a ribonucleoside 5'-triphosphate = RNA(n+1) + diphosphate. It catalyses the reaction Hydrolyzes glutaminyl bonds, and activity is further restricted by preferences for the amino acids in P6 - P1' that vary with the species of potyvirus, e.g. Glu-Xaa-Xaa-Tyr-Xaa-Gln-|-(Ser or Gly) for the enzyme from tobacco etch virus. The natural substrate is the viral polyprotein, but other proteins and oligopeptides containing the appropriate consensus sequence are also cleaved.. It carries out the reaction Hydrolyzes a Gly-|-Gly bond at its own C-terminus, commonly in the sequence -Tyr-Xaa-Val-Gly-|-Gly, in the processing of the potyviral polyprotein.. Its function is as follows. Required for aphid transmission and also has proteolytic activity. Only cleaves a Gly-Gly dipeptide at its own C-terminus. Interacts with virions and aphid stylets. Acts as a suppressor of RNA-mediated gene silencing, also known as post-transcriptional gene silencing (PTGS), a mechanism of plant viral defense that limits the accumulation of viral RNAs. May have RNA-binding activity. In terms of biological role, has helicase activity. It may be involved in replication. Functionally, indispensable for virus replication. Mediates the cap-independent, EIF4E-dependent translation of viral genomic RNAs. Binds to the cap-binding site of host EIF4E and thus interferes with the host EIF4E-dependent mRNA export and translation. VPg-RNA directly binds EIF4E and is a template for transcription. Also forms trimeric complexes with EIF4E-EIF4G, which are templates for translation. Its function is as follows. Has RNA-binding and proteolytic activities. In terms of biological role, an RNA-dependent RNA polymerase that plays an essential role in the virus replication. Functionally, involved in aphid transmission, cell-to-cell and systemis movement, encapsidation of the viral RNA and in the regulation of viral RNA amplification. This Triticum aestivum (Wheat) protein is Genome polyprotein.